We begin with the raw amino-acid sequence, 189 residues long: ATP synthase subunit b (189 aa).

A helical transmembrane segment spans residues 25–45 (LPVWPEVVIGLICFGIVFFVF).

It belongs to the ATPase B chain family. F-type ATPases have 2 components, F(1) - the catalytic core - and F(0) - the membrane proton channel. F(1) has five subunits: alpha(3), beta(3), gamma(1), delta(1), epsilon(1). F(0) has three main subunits: a(1), b(2) and c(10-14). The alpha and beta chains form an alternating ring which encloses part of the gamma chain. F(1) is attached to F(0) by a central stalk formed by the gamma and epsilon chains, while a peripheral stalk is formed by the delta and b chains.

It is found in the cell membrane. Functionally, f(1)F(0) ATP synthase produces ATP from ADP in the presence of a proton or sodium gradient. F-type ATPases consist of two structural domains, F(1) containing the extramembraneous catalytic core and F(0) containing the membrane proton channel, linked together by a central stalk and a peripheral stalk. During catalysis, ATP synthesis in the catalytic domain of F(1) is coupled via a rotary mechanism of the central stalk subunits to proton translocation. Its function is as follows. Component of the F(0) channel, it forms part of the peripheral stalk, linking F(1) to F(0). In Streptomyces griseus subsp. griseus (strain JCM 4626 / CBS 651.72 / NBRC 13350 / KCC S-0626 / ISP 5235), this protein is ATP synthase subunit b.